We begin with the raw amino-acid sequence, 467 residues long: Iroquois-class homeodomain protein irx-1-A (467 aa).

A DNA-binding region (homeobox; TALE-type) is located at residues 126-188 (DPGRPKNATR…NARRRLKKEN (63 aa)). Disordered stretches follow at residues 197-306 (KEDD…PPHS), 318-344 (TSPD…QHPA), and 410-467 (SLSS…LPSA). 2 stretches are compositionally biased toward acidic residues: residues 215–225 (EDDEEIDLESI) and 233–244 (NDGEQSNEEEDE). The segment covering 245-262 (KLEHLRQGEKESLKKESE) has biased composition (basic and acidic residues). Residues 415–431 (KTPERTSPKHSDRENVP) show a composition bias toward basic and acidic residues. The segment covering 447–460 (RENTLSQQEGTSRI) has biased composition (polar residues).

This sequence belongs to the TALE/IRO homeobox family. Expressed early in neural differentiation in the neural plate, and expression continues in the neural tube after neural fold closure. Expressed in the presumptive midbrain territory. Also expressed in the prospective neural crest and the preplacodal field, anterior to the neural plate. Strongly expressed in the profundal placode and weakly expressed in the trigeminal placode. Also expressed in the mesoderm in the Spemann organizer from the start of gastrulation, and subsequently in its derivatives; namely in the notochord as well as in the somites of stage 25 embryos, and the somites and notochord of tailbud embryos. Also expressed in specific and overlapping dynamic patterns with irx2 and irx3 during pronephric kidney development. Renal expression begins in the dorsal region of the pronephric anlage at mid neurula stage and continues to at least tailbud stages where expression is confined to the intermediate tubule segment IT1. Renal expression is maintained at tadpole stages.

The protein resides in the nucleus. Acts partially redundantly with other irx members in neural patterning. Required for formation of the posterior forebrain, midbrain, hindbrain, and to a lesser extent, spinal cord. Acts early in neural plate development to induce expression of some but not all proneural genes, and specify a neural precursor state. Also up-regulates repressors that prevent neuronal differentiation. Patterns the neuroectoderm in both the anterior/posterior and dorsal/ventral axes. Acts primarily as a transcriptional repressor during neural development, and binds to the bmp4 promoter to repress gene expression and thus mediate down-regulation of bmp4 by wnt signaling. Controls multiple processes through bmp4-repression including neural plate development, neural crest specification and Spemann organizer development. Involved in the specification of the preplacodal field at the anterior border of the neural plate. Regulates the genetic cascade of interactions that are necessary for positioning the isthmus organizer and the formation of the midbrain-hindbrain boundary. Required during at least two stages of pronephros kidney development; during neurula stages, maintains transcription of key renal genes to define the size and identity of the pronephric anlage, probably in part through regulation of bmp-signaling. Subsequently required for proper formation of the intermediate tubule segment of the pronephros. Acts principally as a transcriptional activator during pronephros development. This Xenopus laevis (African clawed frog) protein is Iroquois-class homeodomain protein irx-1-A (irx1-a).